Consider the following 162-residue polypeptide: Probable chemoreceptor glutamine deamidase CheD 3 (162 aa).

The protein belongs to the CheD family.

It catalyses the reaction L-glutaminyl-[protein] + H2O = L-glutamyl-[protein] + NH4(+). In terms of biological role, probably deamidates glutamine residues to glutamate on methyl-accepting chemotaxis receptors (MCPs), playing an important role in chemotaxis. This Geobacter sulfurreducens (strain ATCC 51573 / DSM 12127 / PCA) protein is Probable chemoreceptor glutamine deamidase CheD 3.